The sequence spans 182 residues: ATP-dependent protease subunit HslV (182 aa).

T6 is an active-site residue. The Na(+) site is built by A164, C167, and T170.

This sequence belongs to the peptidase T1B family. HslV subfamily. A double ring-shaped homohexamer of HslV is capped on each side by a ring-shaped HslU homohexamer. The assembly of the HslU/HslV complex is dependent on binding of ATP.

It is found in the cytoplasm. It carries out the reaction ATP-dependent cleavage of peptide bonds with broad specificity.. Its activity is regulated as follows. Allosterically activated by HslU binding. Functionally, protease subunit of a proteasome-like degradation complex believed to be a general protein degrading machinery. The polypeptide is ATP-dependent protease subunit HslV (Borreliella afzelii (strain PKo) (Borrelia afzelii)).